A 596-amino-acid polypeptide reads, in one-letter code: uncharacterized protein (596 aa).

Residues 1-31 (MSTSNDPVVSSHDPIKQEKEQETDLEAQVEH) are disordered. Residues 1–37 (MSTSNDPVVSSHDPIKQEKEQETDLEAQVEHKKRNER) are Cytoplasmic-facing. Basic and acidic residues predominate over residues 13 to 22 (DPIKQEKEQE). A helical membrane pass occupies residues 38–58 (GNAFVGFLILIFVYYLLRGGS). Residues 59–596 (NDNDKQEMSH…ILVSDSGEEA (538 aa)) are Lumenal-facing. Asparagine 118 is a glycosylation site (N-linked (GlcNAc...) asparagine). Histidine 197 is a binding site for Zn(2+). The active site involves aspartate 199. Aspartate 232 contributes to the Zn(2+) binding site. The Proton acceptor role is filled by glutamate 266. Positions 267 and 295 each coordinate Zn(2+). Asparagine 466, asparagine 541, and asparagine 555 each carry an N-linked (GlcNAc...) asparagine glycan. Histidine 565 is a Zn(2+) binding site.

This sequence belongs to the peptidase M20A family. Zn(2+) is required as a cofactor.

The protein localises to the vacuole membrane. This is an uncharacterized protein from Schizosaccharomyces pombe (strain 972 / ATCC 24843) (Fission yeast).